The following is a 288-amino-acid chain: Sulfur carrier protein FdhD (288 aa).

Cys-122 functions as the Cysteine persulfide intermediate in the catalytic mechanism. Residue 268 to 273 participates in Mo-bis(molybdopterin guanine dinucleotide) binding; it reads FVRGER.

Belongs to the FdhD family.

The protein resides in the cytoplasm. Required for formate dehydrogenase (FDH) activity. Acts as a sulfur carrier protein that transfers sulfur from IscS to the molybdenum cofactor prior to its insertion into FDH. The protein is Sulfur carrier protein FdhD of Anaeromyxobacter dehalogenans (strain 2CP-1 / ATCC BAA-258).